The primary structure comprises 214 residues: uncharacterized protein (214 aa).

The next 2 membrane-spanning stretches (helical) occupy residues 19-39 and 50-70; these read IAIFALAFISFILILIISYIL and LALFLMDNLYSILLKIFLLIG.

Its subcellular location is the cell membrane. This is an uncharacterized protein from Methanocaldococcus jannaschii (strain ATCC 43067 / DSM 2661 / JAL-1 / JCM 10045 / NBRC 100440) (Methanococcus jannaschii).